Here is a 317-residue protein sequence, read N- to C-terminus: 17-beta-hydroxysteroid dehydrogenase type 6 (317 aa).

The N-terminal stretch at 1 to 17 (MWLYLAAFVGLYYLLHW) is a signal peptide. 33–57 (FITGCDSGFGNLLARQLDARGLRVL) serves as a coordination point for NAD(+). N-linked (GlcNAc...) asparagine glycosylation is present at Asn-161. Ser-164 lines the substrate pocket. The active-site Proton acceptor is Tyr-176. N-linked (GlcNAc...) asparagine glycosylation is found at Asn-215 and Asn-256.

Belongs to the short-chain dehydrogenases/reductases (SDR) family. As to expression, detected in liver and prostate (at protein level). Detected in adult liver, lung, brain, placenta, prostate, adrenal gland, testis, mammary gland, spleen, spinal cord and uterus. Detected in caudate nucleus, and at lower levels in amygdala, corpus callosum, hippocampus, substantia nigra and thalamus. Detected in fetal lung, liver and brain.

It is found in the microsome membrane. The protein localises to the early endosome membrane. The enzyme catalyses all-trans-retinol--[retinol-binding protein] + NAD(+) = all-trans-retinal--[retinol-binding protein] + NADH + H(+). The catalysed reaction is all-trans-retinol + NAD(+) = all-trans-retinal + NADH + H(+). It carries out the reaction androsterone + NAD(+) = 5alpha-androstan-3,17-dione + NADH + H(+). It catalyses the reaction testosterone + NAD(+) = androst-4-ene-3,17-dione + NADH + H(+). The enzyme catalyses 5alpha-androstane-3alpha,17beta-diol + NAD(+) = 17beta-hydroxy-5alpha-androstan-3-one + NADH + H(+). The catalysed reaction is 17beta-estradiol + NAD(+) = estrone + NADH + H(+). It carries out the reaction 17beta-estradiol + NADP(+) = estrone + NADPH + H(+). It catalyses the reaction 3alpha-hydroxy-5alpha-pregnan-20-one + NAD(+) = 5alpha-pregnane-3,20-dione + NADH + H(+). The enzyme catalyses 5alpha-androstane-3beta,17beta-diol + NAD(+) = 17beta-hydroxy-5alpha-androstan-3-one + NADH + H(+). The catalysed reaction is 3beta-hydroxy-5alpha-androstan-17-one + NAD(+) = 5alpha-androstan-3,17-dione + NADH + H(+). In terms of biological role, NAD-dependent oxidoreductase with broad substrate specificity that shows both oxidative and reductive activity (in vitro). Has 17-beta-hydroxysteroid dehydrogenase activity towards various steroids (in vitro). Converts 5-alpha-androstan-3-alpha,17-beta-diol to androsterone and estradiol to estrone (in vitro). Has 3-alpha-hydroxysteroid dehydrogenase activity towards androsterone (in vitro). Has retinol dehydrogenase activity towards all-trans-retinol (in vitro). Can convert androsterone to epi-androsterone. Androsterone is first oxidized to 5-alpha-androstane-3,17-dione and then reduced to epi-andosterone. Can act on both C-19 and C-21 3-alpha-hydroxysteroids. The protein is 17-beta-hydroxysteroid dehydrogenase type 6 (HSD17B6) of Homo sapiens (Human).